The sequence spans 500 residues: Chromosomal replication initiator protein DnaA (500 aa).

The segment at 1–81 is domain I, interacts with DnaA modulators; that stretch reads MVNASGDPVI…LQALRTVTGE (81 aa). The domain II stretch occupies residues 81-155; sequence ENMFPAFKVV…QQKMNRDPET (75 aa). The domain III, AAA+ region stretch occupies residues 156-377; it reads HLNKNFTFDS…GALTRVTAVA (222 aa). Glycine 200, glycine 202, lysine 203, and threonine 204 together coordinate ATP. Residues 378 to 500 form a domain IV, binds dsDNA region; sequence SLSNQPVTRA…TVRLKQSNTN (123 aa).

It belongs to the DnaA family. In terms of assembly, oligomerizes as a right-handed, spiral filament on DNA at oriC.

Its subcellular location is the cytoplasm. In terms of biological role, plays an essential role in the initiation and regulation of chromosomal replication. ATP-DnaA binds to the origin of replication (oriC) to initiate formation of the DNA replication initiation complex once per cell cycle. Binds the DnaA box (a 9 base pair repeat at the origin) and separates the double-stranded (ds)DNA. Forms a right-handed helical filament on oriC DNA; dsDNA binds to the exterior of the filament while single-stranded (ss)DNA is stabiized in the filament's interior. The ATP-DnaA-oriC complex binds and stabilizes one strand of the AT-rich DNA unwinding element (DUE), permitting loading of DNA polymerase. After initiation quickly degrades to an ADP-DnaA complex that is not apt for DNA replication. Binds acidic phospholipids. The polypeptide is Chromosomal replication initiator protein DnaA (Bifidobacterium longum (strain DJO10A)).